Consider the following 297-residue polypeptide: N-acetylneuraminate lyase (297 aa).

Aceneuramate is bound by residues Ser47 and Thr48. Tyr137 acts as the Proton donor in catalysis. Catalysis depends on Lys165, which acts as the Schiff-base intermediate with substrate. The aceneuramate site is built by Thr167, Gly189, Asp191, Glu192, and Ser208.

The protein belongs to the DapA family. NanA subfamily. Homotetramer.

The protein localises to the cytoplasm. It catalyses the reaction aceneuramate = aldehydo-N-acetyl-D-mannosamine + pyruvate. It participates in amino-sugar metabolism; N-acetylneuraminate degradation; D-fructose 6-phosphate from N-acetylneuraminate: step 1/5. Functionally, catalyzes the reversible aldol cleavage of N-acetylneuraminic acid (sialic acid; Neu5Ac) to form pyruvate and N-acetylmannosamine (ManNAc) via a Schiff base intermediate. In Shigella boydii serotype 4 (strain Sb227), this protein is N-acetylneuraminate lyase.